We begin with the raw amino-acid sequence, 766 residues long: 5-methyltetrahydropteroyltriglutamate--homocysteine methyltransferase (766 aa).

Residues 16–19 (RELK) and Lys117 each bind 5-methyltetrahydropteroyltri-L-glutamate. L-homocysteine-binding positions include 442–444 (IGS) and Glu495. Residues 442–444 (IGS) and Glu495 each bind L-methionine. 5-methyltetrahydropteroyltri-L-glutamate contacts are provided by residues 526 to 527 (RC) and Trp572. Asp610 contributes to the L-homocysteine binding site. Asp610 serves as a coordination point for L-methionine. Glu616 contacts 5-methyltetrahydropteroyltri-L-glutamate. 3 residues coordinate Zn(2+): His652, Cys654, and Glu676. His705 (proton donor) is an active-site residue. Zn(2+) is bound at residue Cys737.

This sequence belongs to the vitamin-B12 independent methionine synthase family. The cofactor is Zn(2+).

It carries out the reaction 5-methyltetrahydropteroyltri-L-glutamate + L-homocysteine = tetrahydropteroyltri-L-glutamate + L-methionine. It functions in the pathway amino-acid biosynthesis; L-methionine biosynthesis via de novo pathway; L-methionine from L-homocysteine (MetE route): step 1/1. Functionally, catalyzes the transfer of a methyl group from 5-methyltetrahydrofolate to homocysteine resulting in methionine formation. In Bordetella avium (strain 197N), this protein is 5-methyltetrahydropteroyltriglutamate--homocysteine methyltransferase.